Reading from the N-terminus, the 363-residue chain is MKLRHFLIFLMLIPISSSICFDLKTLQCWPMEIQEMALMLTARNTARYDCSGKSKSEWYETGQKRLGWGIYYISSGLFFQLIGWPVIWVFITKFSMTNALKVYRIMVFIGLIEITEIWGNSVFPGFVAVFGEVYCTSPILMTIVGKMTMVQWVLGSSSAAFLGFHRLCDMIQKLEWLVNTNTKTGLWLTVLFFYACYGSIFFDTVLFNSDYMAPLLDPMIGKQGIIYSNNFLYFHNIIVATTLILVYACLCTLWSSREMNTSSLHVSKFQRSILLQSICISLTYAIPAISFVTMFVLPIPKWFFHVSDITYQLSGGLPFIMYICLNKRVREEFLHLLRVCRKAEKSQVAVIPLGNSTVSAFNN.

Positions 1 to 18 (MKLRHFLIFLMLIPISSS) are cleaved as a signal peptide. The next 7 helical transmembrane spans lie at 70–90 (IYYI…IWVF), 107–127 (VFIG…PGFV), 143–163 (IVGK…AFLG), 187–207 (WLTV…TVLF), 231–251 (FLYF…ACLC), 278–298 (ICIS…FVLP), and 303–323 (FFHV…IMYI).

This sequence belongs to the nematode receptor-like protein srt family.

The protein resides in the membrane. The polypeptide is Serpentine receptor class T-55 (srt-55) (Caenorhabditis elegans).